The chain runs to 285 residues: Phasyl DNA replicon protein arp (285 aa).

Its function is as follows. Essential for autonomous replication of the phasyl DNA replicon. This Escherichia coli protein is Phasyl DNA replicon protein arp (arp).